Reading from the N-terminus, the 465-residue chain is Ribulose bisphosphate carboxylase large chain (465 aa).

The residue at position 4 (K4) is an N6,N6,N6-trimethyllysine. Positions 113 and 163 each coordinate substrate. Catalysis depends on K165, which acts as the Proton acceptor. K167 provides a ligand contact to substrate. Mg(2+)-binding residues include K191, D193, and E194. K191 is modified (N6-carboxylysine). H284 acts as the Proton acceptor in catalysis. Residues R285, H317, and S369 each coordinate substrate.

Belongs to the RuBisCO large chain family. Type I subfamily. As to quaternary structure, heterohexadecamer of 8 large chains and 8 small chains; disulfide-linked. The disulfide link is formed within the large subunit homodimers. Requires Mg(2+) as cofactor. Post-translationally, the disulfide bond which can form in the large chain dimeric partners within the hexadecamer appears to be associated with oxidative stress and protein turnover.

The protein localises to the plastid. The protein resides in the chloroplast. The catalysed reaction is 2 (2R)-3-phosphoglycerate + 2 H(+) = D-ribulose 1,5-bisphosphate + CO2 + H2O. The enzyme catalyses D-ribulose 1,5-bisphosphate + O2 = 2-phosphoglycolate + (2R)-3-phosphoglycerate + 2 H(+). RuBisCO catalyzes two reactions: the carboxylation of D-ribulose 1,5-bisphosphate, the primary event in carbon dioxide fixation, as well as the oxidative fragmentation of the pentose substrate in the photorespiration process. Both reactions occur simultaneously and in competition at the same active site. The chain is Ribulose bisphosphate carboxylase large chain from Cornus canadensis (Bunchberry dogwood).